The sequence spans 453 residues: Ezy-1 protein (453 aa).

An N-terminal signal peptide occupies residues 1–28; sequence MQLSNSLRSARSAAASSGCALASRPVVA. Disordered regions lie at residues 167–187, 272–307, and 412–453; these read SDGGGDESGDRDTADAADADG, TGKAEPGAEGDDGEGEEEGEAQDVGEDAVDSSSSGG, and SAGD…SPNM. Acidic residues predominate over residues 279 to 300; the sequence is AEGDDGEGEEEGEAQDVGEDAV. Basic and acidic residues predominate over residues 415–425; sequence DGHEPEPKRPE.

The sequence is that of Ezy-1 protein (Ezy-1) from Chlamydomonas reinhardtii (Chlamydomonas smithii).